Here is a 456-residue protein sequence, read N- to C-terminus: NADPH-ferredoxin reductase FprA (456 aa).

Residues Ser14, Glu40, Leu48, and Val84 each contribute to the FAD site. NADP(+) is bound by residues Arg110, 155 to 158 (NGNV), 199 to 200 (RR), and Glu211. Residues Trp359 and 366–368 (GVI) each bind FAD. Gly366 is a binding site for NADP(+).

The protein belongs to the ferredoxin--NADP reductase type 1 family. As to quaternary structure, monomer. It depends on FAD as a cofactor.

The enzyme catalyses 2 reduced [2Fe-2S]-[ferredoxin] + NADP(+) + H(+) = 2 oxidized [2Fe-2S]-[ferredoxin] + NADPH. Functionally, may serve as electron transfer protein and supply electrons to P450 systems. This is NADPH-ferredoxin reductase FprA (fprA) from Mycobacterium tuberculosis (strain CDC 1551 / Oshkosh).